Here is a 294-residue protein sequence, read N- to C-terminus: Basic endochitinase (294 aa).

The N-terminal stretch at 1-24 (MNIKVSLLFILPIFLLLLTSKVKA) is a signal peptide. One can recognise a GH18 domain in the interval 25 to 294 (GDIVVYWGQD…GYSSAIRGAV (270 aa)). Cystine bridges form between Cys44–Cys91 and Cys74–Cys81. Glu151 serves as the catalytic Proton donor. Cys182 and Cys211 form a disulfide bridge.

This sequence belongs to the glycosyl hydrolase 18 family. Chitinase class II subfamily.

It carries out the reaction Random endo-hydrolysis of N-acetyl-beta-D-glucosaminide (1-&gt;4)-beta-linkages in chitin and chitodextrins.. In terms of biological role, this protein functions as a defense against chitin containing fungal pathogens. The protein is Basic endochitinase of Nicotiana tabacum (Common tobacco).